Consider the following 958-residue polypeptide: UPF0182 protein TW644 (958 aa).

The next 7 helical transmembrane spans lie at 14 to 34 (IAILSVVAFLVLIALTAFFLV), 59 to 79 (IFVVFCLAFVFVSIFLWLCMF), 107 to 127 (KIVVLLVSLGLGAVAGIFAAS), 166 to 186 (LFFLLVTFVLGGILSILISVV), 205 to 225 (VQYAVLAAGIFVLLGLEFWLN), 249 to 269 (LIPGFAVLALVALGVALLFCI), and 280 to 300 (IIGVALAVVSALVVITALPWG).

It belongs to the UPF0182 family.

Its subcellular location is the cell membrane. The protein is UPF0182 protein TW644 of Tropheryma whipplei (strain TW08/27) (Whipple's bacillus).